The sequence spans 385 residues: Sesquiterpene alcohol synthase (385 aa).

The Mg(2+) site is built by Asp-123 and Asp-127. A DDXXD motif motif is present at residues 123–127 (DDISD).

It belongs to the terpene synthase family. Mg(2+) is required as a cofactor. As to expression, specifically expressed in tissues lining the cuticle of the abdominal sternites of mature males.

The enzyme catalyses (2E,6E)-farnesyl diphosphate + H2O = (1S,6S,7R)-sesquipiperitol + diphosphate. It participates in pheromone biosynthesis. In terms of biological role, sesquiterpene alcohol synthase that catalyzes the formation of (1S,6S,7R)-sesquipiperitol, a terpene intermediate in murgantiol biosynthesis, a male-released aggregation pheromone. The protein is Sesquiterpene alcohol synthase of Murgantia histrionica (Harlequin bug).